The following is a 201-amino-acid chain: LexA repressor (201 aa).

The H-T-H motif DNA-binding region spans 28 to 48; it reads RAEIANQLGFRSANAAEEHLK. Catalysis depends on for autocatalytic cleavage activity residues Ser118 and Lys155.

It belongs to the peptidase S24 family. In terms of assembly, homodimer.

It carries out the reaction Hydrolysis of Ala-|-Gly bond in repressor LexA.. Functionally, represses a number of genes involved in the response to DNA damage (SOS response), including recA and lexA. In the presence of single-stranded DNA, RecA interacts with LexA causing an autocatalytic cleavage which disrupts the DNA-binding part of LexA, leading to derepression of the SOS regulon and eventually DNA repair. The polypeptide is LexA repressor (Saccharophagus degradans (strain 2-40 / ATCC 43961 / DSM 17024)).